The chain runs to 52 residues: Insulin (52 aa).

Intrachain disulfides connect C9–C38, C21–C51, and C37–C42.

It belongs to the insulin family. As to quaternary structure, heterodimer of a B chain and an A chain linked by two disulfide bonds.

Its subcellular location is the secreted. Insulin decreases blood glucose concentration. It increases cell permeability to monosaccharides, amino acids and fatty acids. It accelerates glycolysis, the pentose phosphate cycle, and glycogen synthesis in liver. The protein is Insulin (ins) of Piaractus mesopotamicus (Small-scaled pacu).